Here is a 209-residue protein sequence, read N- to C-terminus: Small ribosomal subunit protein uS4 (209 aa).

The segment at 22–45 (RGRNPLLRKPNPPGQHGMQRKKKS) is disordered. The 62-residue stretch at 93 to 154 (CRLDNIVYRL…KSRRLAIVTE (62 aa)) folds into the S4 RNA-binding domain.

Belongs to the universal ribosomal protein uS4 family. In terms of assembly, part of the 30S ribosomal subunit. Contacts protein S5. The interaction surface between S4 and S5 is involved in control of translational fidelity.

One of the primary rRNA binding proteins, it binds directly to 16S rRNA where it nucleates assembly of the body of the 30S subunit. Functionally, with S5 and S12 plays an important role in translational accuracy. The chain is Small ribosomal subunit protein uS4 from Chlamydia muridarum (strain MoPn / Nigg).